Consider the following 718-residue polypeptide: K(+)-insensitive pyrophosphate-energized proton pump (718 aa).

A run of 6 helical transmembrane segments spans residues 6–26 (AVLV…IWAI), 54–76 (LTRQ…WYLL), 81–103 (AIGF…HVSV), 112–132 (AASL…AITG), 133–153 (LLVA…LTVW), and 168–188 (VSLG…GGIF). Lys-190 serves as a coordination point for substrate. Mg(2+) is bound by residues Asp-193, Asp-197, Asn-220, and Asp-223. Helical transmembrane passes span 240–260 (AVTV…SDIL), 265–285 (LYPL…TFFV), 300–320 (GLIA…TLTV), 335–355 (GTNL…IVVI), 385–405 (GLAV…GGII), and 413–433 (LFGT…IVAL). Residue Asp-441 participates in Mg(2+) binding. 4 consecutive transmembrane segments (helical) span residues 472–492 (AVTK…LFAA), 524–544 (YVVA…GMAM), 593–613 (IIPS…VLLI), and 620–640 (AFAA…FVAI). Ca(2+)-binding residues include Asp-650, Asp-682, and Asp-686. A substrate-binding site is contributed by Lys-689. A helical membrane pass occupies residues 695–715 (AVNPAIKITNIVALLLLAVLA).

It belongs to the H(+)-translocating pyrophosphatase (TC 3.A.10) family. K(+)-insensitive subfamily. As to quaternary structure, homodimer. Mg(2+) serves as cofactor.

The protein localises to the cell inner membrane. The catalysed reaction is diphosphate + H2O + H(+)(in) = 2 phosphate + 2 H(+)(out). Functionally, proton pump that utilizes the energy of pyrophosphate hydrolysis as the driving force for proton movement across the membrane. Generates a proton motive force. The sequence is that of K(+)-insensitive pyrophosphate-energized proton pump from Brucella anthropi (strain ATCC 49188 / DSM 6882 / CCUG 24695 / JCM 21032 / LMG 3331 / NBRC 15819 / NCTC 12168 / Alc 37) (Ochrobactrum anthropi).